The following is a 335-amino-acid chain: Nuclear distribution protein nudE homolog 1 (335 aa).

Residues 1-93 (MEDSGKTFSS…VQHSEGYRQI (93 aa)) are self-association. Residues 18-188 (WKDLAMTYKQ…ELAVQQKQEK (171 aa)) are a coiled coil. The segment at 88–156 (EGYRQISALE…ERNAFLESEL (69 aa)) is interaction with PAFAH1B1. Positions 167–290 (QRLKDEARDL…QSPNRTGGPA (124 aa)) are interaction with CENPF. Positions 181–246 (AVQQKQEKPR…DDSTGGTPLT (66 aa)) are disordered. Residues 204-214 (TAVQATGSVPS) show a composition bias toward polar residues. Ser-211 is subject to Phosphoserine. Phosphothreonine occurs at positions 215 and 228. A phosphoserine mark is found at Ser-231 and Ser-239. Phosphothreonine occurs at positions 243 and 246. Cys-274 carries S-palmitoyl cysteine; by ZDHHC2, ZDHHC3 and ZDHHC7 lipidation. Residues 279 to 335 (YDQSPNRTGGPASGRSSKNRDGGERRPSSTSVPLGDKGLDTSCRWLSKSTTRSSSSC) form a disordered region. Ser-282 is modified (phosphoserine). The segment covering 296–305 (KNRDGGERRP) has biased composition (basic and acidic residues). Position 309 is a phosphoserine (Ser-309). The span at 325-335 (SKSTTRSSSSC) shows a compositional bias: low complexity.

The protein belongs to the nudE family. As to quaternary structure, homodimer. Interacts with CNTRL, LIS1, dynein, SLMAP and TCP1. Interacts with CENPF, dynactin, tubulin gamma, PAFAH1B1, PCM1 and PCNT. Interacts with ZNF365. Interacts with GTP-bound RAB9A and RAB9B; the interaction leads to RAB9-dynein motor tethering. Interacts (via C-terminus) with MCRS1 (via C-terminus); phosphorylation of NDE1 inhibits the interaction. In terms of processing, phosphorylated in mitosis. Phosphorylated in vitro by CDC2. Phosphorylation at Thr-246 is essential for the G2/M transition. As to expression, expressed in the neuroepithelium throughout the developing brain, including the cerebral cortex and cerebellum.

Its subcellular location is the cytoplasm. It localises to the cytoskeleton. It is found in the microtubule organizing center. The protein localises to the centrosome. The protein resides in the chromosome. Its subcellular location is the centromere. It localises to the kinetochore. It is found in the spindle. The protein localises to the cleavage furrow. The protein resides in the cytoplasmic vesicle membrane. Its function is as follows. Required for centrosome duplication and formation and function of the mitotic spindle. Essential for the development of the cerebral cortex. May regulate the production of neurons by controlling the orientation of the mitotic spindle during division of cortical neuronal progenitors of the proliferative ventricular zone of the brain. Orientation of the division plane perpendicular to the layers of the cortex gives rise to two proliferative neuronal progenitors whereas parallel orientation of the division plane yields one proliferative neuronal progenitor and a postmitotic neuron. A premature shift towards a neuronal fate within the progenitor population may result in an overall reduction in the final number of neurons and an increase in the number of neurons in the deeper layers of the cortex. Acts as a RAB9A/B effector that tethers RAB9-associated late endosomes to the dynein motor for their retrograde transport to the trans-Golgi network. The protein is Nuclear distribution protein nudE homolog 1 of Homo sapiens (Human).